The chain runs to 530 residues: Bifunctional purine biosynthesis protein PurH (530 aa).

In terms of domain architecture, MGS-like spans methionine 1 to valine 148.

It belongs to the PurH family.

It carries out the reaction (6R)-10-formyltetrahydrofolate + 5-amino-1-(5-phospho-beta-D-ribosyl)imidazole-4-carboxamide = 5-formamido-1-(5-phospho-D-ribosyl)imidazole-4-carboxamide + (6S)-5,6,7,8-tetrahydrofolate. The catalysed reaction is IMP + H2O = 5-formamido-1-(5-phospho-D-ribosyl)imidazole-4-carboxamide. It functions in the pathway purine metabolism; IMP biosynthesis via de novo pathway; 5-formamido-1-(5-phospho-D-ribosyl)imidazole-4-carboxamide from 5-amino-1-(5-phospho-D-ribosyl)imidazole-4-carboxamide (10-formyl THF route): step 1/1. The protein operates within purine metabolism; IMP biosynthesis via de novo pathway; IMP from 5-formamido-1-(5-phospho-D-ribosyl)imidazole-4-carboxamide: step 1/1. This Aeromonas salmonicida (strain A449) protein is Bifunctional purine biosynthesis protein PurH.